Reading from the N-terminus, the 137-residue chain is Small ribosomal subunit protein bS18c (137 aa).

This sequence belongs to the bacterial ribosomal protein bS18 family. In terms of assembly, part of the 30S ribosomal subunit.

The protein resides in the plastid. The protein localises to the chloroplast. This chain is Small ribosomal subunit protein bS18c (rps18), found in Chlamydomonas reinhardtii (Chlamydomonas smithii).